Reading from the N-terminus, the 322-residue chain is Cysteine protease YopT (322 aa).

Catalysis depends on residues cysteine 139, histidine 258, and aspartate 274.

It belongs to the peptidase C58 family. In terms of assembly, interacts with human ARHA.

It localises to the secreted. Functionally, cysteine protease, which is translocated into infected cells and plays a central role in pathogenesis by cleaving the C-terminus end of the human small GTPase RhoA/ARHA, a regulator of cytoskeleton. Once cleaved, ARHA loses its lipid modification, and is released from the cell membrane, leading to the subsequent disruption of actin cytoskeleton of the host cell. The chain is Cysteine protease YopT (yopT) from Yersinia pestis.